Here is a 434-residue protein sequence, read N- to C-terminus: Trigger factor (434 aa).

Residues 161–246 (EDRVTIDFTG…LKKVEERELP (86 aa)) enclose the PPIase FKBP-type domain.

This sequence belongs to the FKBP-type PPIase family. Tig subfamily.

It localises to the cytoplasm. The enzyme catalyses [protein]-peptidylproline (omega=180) = [protein]-peptidylproline (omega=0). Involved in protein export. Acts as a chaperone by maintaining the newly synthesized protein in an open conformation. Functions as a peptidyl-prolyl cis-trans isomerase. This is Trigger factor from Pectobacterium carotovorum subsp. carotovorum (strain PC1).